Reading from the N-terminus, the 601-residue chain is COP9 signalosome complex subunit 1 (601 aa).

Positions 1-10 (MQNELLDDPM) are enriched in acidic residues. 2 disordered regions span residues 1 to 54 (MQNE…LDNP) and 268 to 294 (DADD…PYMV). Residues 14 to 24 (APAAEAAAADE) are compositionally biased toward low complexity. The region spanning 338-500 (TILQIKTECL…GIVRILDERD (163 aa)) is the PCI domain. Positions 535-581 (SISDKETRPKRKNQKESAKFDRNFGGIDVDEDPRGIAGPSGLSDDFN) are disordered.

This sequence belongs to the CSN1 family. Component of the CSN complex, probably composed of csn-1, csn-2, csn-3, csn-4, csn-5, csn-6 and csn-7. Within the complex it probably interacts directly with csn-2, csn-4 and csn-5. May interact with itself. Interacts with rbx-1.

It is found in the cytoplasm. The protein localises to the nucleus. Essential component of the COP9 signalosome complex (CSN), a complex involved in various cellular and developmental processes. The CSN complex is an essential regulator of the ubiquitin (Ubl) conjugation pathway by mediating the deneddylation of the cullin subunits of the SCF-type E3 ligase complexes, leading to decrease the Ubl ligase activity of SCF. The CSN complex plays an essential role in embryogenesis and oogenesis and is required to regulate microtubule stability in the early embryo. Mediates mei-3/katanin targeting for degradation at the meiosis to mitosis transition via deneddylation of cul-3. In Caenorhabditis elegans, this protein is COP9 signalosome complex subunit 1 (csn-1).